A 300-amino-acid chain; its full sequence is uncharacterized protein (300 aa).

Transmembrane regions (helical) follow at residues 13-35 (LLCI…LQPL), 45-67 (MLTM…SLLS), 80-102 (WVLF…WAPL), 106-128 (GINI…WAWL), 180-202 (IPAL…IYIL), 217-236 (YWLL…SANL), 243-265 (PVSI…AVFV), and 275-294 (YFTY…EGLL).

It belongs to the EamA transporter family.

The protein localises to the cell membrane. This is an uncharacterized protein from Haemophilus influenzae (strain ATCC 51907 / DSM 11121 / KW20 / Rd).